The following is a 157-amino-acid chain: SUMO-conjugating enzyme UBC9 (157 aa).

An N-acetylserine modification is found at Ser2. One can recognise a UBC core domain in the interval 4-157 (LCLQRLQEER…VLLQAKQYSK (154 aa)). Cys93 acts as the Glycyl thioester intermediate in catalysis.

It belongs to the ubiquitin-conjugating enzyme family. As to quaternary structure, interacts with SIZ1.

Its subcellular location is the nucleus. It functions in the pathway protein modification; protein sumoylation. In terms of biological role, E2 ubiquitin-like--protein ligase mediating SUMO/Smt3 attachment to septins and PCNA. Seems to be involved in degradation of S- (CLB5) and M-phase cyclins (CLB2). The polypeptide is SUMO-conjugating enzyme UBC9 (UBC9) (Saccharomyces cerevisiae (strain ATCC 204508 / S288c) (Baker's yeast)).